The chain runs to 477 residues: tRNA-2-methylthio-N(6)-dimethylallyladenosine synthase (477 aa).

The MTTase N-terminal domain maps to K3–G120. Positions 12, 49, 83, 157, 161, and 164 each coordinate [4Fe-4S] cluster. The 233-residue stretch at K143–R375 folds into the Radical SAM core domain. The region spanning R378–R441 is the TRAM domain.

This sequence belongs to the methylthiotransferase family. MiaB subfamily. Monomer. The cofactor is [4Fe-4S] cluster.

The protein resides in the cytoplasm. It catalyses the reaction N(6)-dimethylallyladenosine(37) in tRNA + (sulfur carrier)-SH + AH2 + 2 S-adenosyl-L-methionine = 2-methylsulfanyl-N(6)-dimethylallyladenosine(37) in tRNA + (sulfur carrier)-H + 5'-deoxyadenosine + L-methionine + A + S-adenosyl-L-homocysteine + 2 H(+). In terms of biological role, catalyzes the methylthiolation of N6-(dimethylallyl)adenosine (i(6)A), leading to the formation of 2-methylthio-N6-(dimethylallyl)adenosine (ms(2)i(6)A) at position 37 in tRNAs that read codons beginning with uridine. The protein is tRNA-2-methylthio-N(6)-dimethylallyladenosine synthase of Pseudoalteromonas atlantica (strain T6c / ATCC BAA-1087).